A 321-amino-acid chain; its full sequence is Tyrosine recombinase XerC (321 aa).

In terms of domain architecture, Core-binding (CB) spans 16–107 (SDIGQQIVRW…GLRSFARFLE (92 aa)). A Tyr recombinase domain is found at 128 to 315 (SVPKPIHMSA…DSERLLDVYR (188 aa)). Catalysis depends on residues arginine 173, lysine 199, histidine 267, arginine 270, and histidine 293. Tyrosine 302 (O-(3'-phospho-DNA)-tyrosine intermediate) is an active-site residue.

This sequence belongs to the 'phage' integrase family. XerC subfamily. As to quaternary structure, forms a cyclic heterotetrameric complex composed of two molecules of XerC and two molecules of XerD.

The protein localises to the cytoplasm. Its function is as follows. Site-specific tyrosine recombinase, which acts by catalyzing the cutting and rejoining of the recombining DNA molecules. The XerC-XerD complex is essential to convert dimers of the bacterial chromosome into monomers to permit their segregation at cell division. It also contributes to the segregational stability of plasmids. The chain is Tyrosine recombinase XerC from Nitrobacter winogradskyi (strain ATCC 25391 / DSM 10237 / CIP 104748 / NCIMB 11846 / Nb-255).